The chain runs to 89 residues: Large ribosomal subunit protein bL27 (89 aa).

The disordered stretch occupies residues 1 to 22 (MAHKKGTGSTRNGRDSNAQRLG). Polar residues predominate over residues 7-19 (TGSTRNGRDSNAQ).

This sequence belongs to the bacterial ribosomal protein bL27 family.

This Cyanothece sp. (strain PCC 7425 / ATCC 29141) protein is Large ribosomal subunit protein bL27.